A 198-amino-acid chain; its full sequence is Recombination protein RecR (198 aa).

Residues 57 to 72 (CTICGHITDTDPCYIC) form a C4-type zinc finger. A Toprim domain is found at 80 to 175 (TTICVVQDPK…KVTRIAHGLP (96 aa)).

The protein belongs to the RecR family.

In terms of biological role, may play a role in DNA repair. It seems to be involved in an RecBC-independent recombinational process of DNA repair. It may act with RecF and RecO. In Geobacillus kaustophilus (strain HTA426), this protein is Recombination protein RecR.